Consider the following 132-residue polypeptide: Ribosome-binding factor A (132 aa).

Belongs to the RbfA family. Monomer. Binds 30S ribosomal subunits, but not 50S ribosomal subunits or 70S ribosomes.

The protein resides in the cytoplasm. Functionally, one of several proteins that assist in the late maturation steps of the functional core of the 30S ribosomal subunit. Associates with free 30S ribosomal subunits (but not with 30S subunits that are part of 70S ribosomes or polysomes). Required for efficient processing of 16S rRNA. May interact with the 5'-terminal helix region of 16S rRNA. The polypeptide is Ribosome-binding factor A (Burkholderia cenocepacia (strain ATCC BAA-245 / DSM 16553 / LMG 16656 / NCTC 13227 / J2315 / CF5610) (Burkholderia cepacia (strain J2315))).